The chain runs to 93 residues: Acylphosphatase (93 aa).

The 87-residue stretch at 6-92 folds into the Acylphosphatase-like domain; sequence RAHVWVGGKV…EGLTHFEVLR (87 aa). Catalysis depends on residues Arg-21 and Asn-39.

This sequence belongs to the acylphosphatase family.

It carries out the reaction an acyl phosphate + H2O = a carboxylate + phosphate + H(+). The polypeptide is Acylphosphatase (acyP) (Gloeobacter violaceus (strain ATCC 29082 / PCC 7421)).